Here is a 479-residue protein sequence, read N- to C-terminus: Glycerol kinase 5 (479 aa).

ATP is bound by residues S20 and S21. R90, D267, and Q268 together coordinate glycerol. 3 residues coordinate ATP: T289, G332, and G432.

Belongs to the FGGY kinase family.

It is found in the cytoplasm. The enzyme catalyses glycerol + ATP = sn-glycerol 3-phosphate + ADP + H(+). It functions in the pathway polyol metabolism; glycerol degradation via glycerol kinase pathway; sn-glycerol 3-phosphate from glycerol: step 1/1. Functionally, skin-specific kinase that plays a key role in glycerol metabolism, catalyzing its phosphorylation to produce sn-glycerol 3-phosphate. Involved in skin-specific regulation of sterol regulatory element-binding protein (SREBP) processing and lipid biosynthesis. The sequence is that of Glycerol kinase 5 (gk5) from Xenopus laevis (African clawed frog).